The primary structure comprises 285 residues: 2,3,4,5-tetrahydropyridine-2,6-dicarboxylate N-succinyltransferase (285 aa).

Positions 111 and 148 each coordinate substrate.

It belongs to the transferase hexapeptide repeat family. Homotrimer.

The protein localises to the cytoplasm. It carries out the reaction (S)-2,3,4,5-tetrahydrodipicolinate + succinyl-CoA + H2O = (S)-2-succinylamino-6-oxoheptanedioate + CoA. The protein operates within amino-acid biosynthesis; L-lysine biosynthesis via DAP pathway; LL-2,6-diaminopimelate from (S)-tetrahydrodipicolinate (succinylase route): step 1/3. This chain is 2,3,4,5-tetrahydropyridine-2,6-dicarboxylate N-succinyltransferase, found in Sinorhizobium medicae (strain WSM419) (Ensifer medicae).